The sequence spans 454 residues: Elongation factor Tu, mitochondrial (454 aa).

A mitochondrion-targeting transit peptide spans 1 to 51 (MASVVLRNPSSKRLVPFSSQIYSRCGASVTSSYSISHSIGGDDLSSSTFGT). The 197-residue stretch at 65 to 261 (KPHVNVGTIG…AVDEYIPDPV (197 aa)) folds into the tr-type G domain. The G1 stretch occupies residues 74–81 (GHVDHGKT). 74-81 (GHVDHGKT) contributes to the GTP binding site. Threonine 82 bears the Phosphothreonine mark. Residues 115–119 (GITIA) form a G2 region. Positions 136–139 (DCPG) are G3. GTP is bound by residues 136 to 140 (DCPGH) and 191 to 194 (NKVD). Residues 191 to 194 (NKVD) form a G4 region. The G5 stretch occupies residues 229-231 (SAL).

This sequence belongs to the TRAFAC class translation factor GTPase superfamily. Classic translation factor GTPase family. EF-Tu/EF-1A subfamily.

Its subcellular location is the mitochondrion. This protein promotes the GTP-dependent binding of aminoacyl-tRNA to the A-site of ribosomes during protein biosynthesis. The sequence is that of Elongation factor Tu, mitochondrial (TUFA) from Arabidopsis thaliana (Mouse-ear cress).